The following is a 169-amino-acid chain: MSATLQPYLEAVRHTLQAALCLEQFSSQVVERHNKPEVEVQTSKELLMTPVVVARNKQERVLIEPSVNSVRISIAIKQSDEIEKILCHKFTRFMCQRADNFFVLRRKPLPGYDISFLITASHTEAMFKHKLVDFLLHFMQEIDKEISEMKLSLNARARVSAEEFLKRFN.

The protein belongs to the ARPC4 family. Component of the Arp2/3 complex, at least composed of arx-1, arx-2, arx-4 and arx-6.

The protein localises to the cytoplasm. The protein resides in the cytoskeleton. In terms of biological role, functions as actin-binding component of the Arp2/3 complex which is involved in regulation of actin polymerization and together with an activating nucleation-promoting factor (NPF) mediates the formation of branched actin networks. Seems to contact the mother actin filament. Plays a role in time-dependent memory loss and the retention of conditioned behavior over time. This chain is Probable actin-related protein 2/3 complex subunit 4, found in Caenorhabditis elegans.